The following is a 196-amino-acid chain: Orotate phosphoribosyltransferase (196 aa).

5-phospho-alpha-D-ribose 1-diphosphate-binding positions include R102, K103, K106, H108, and 129 to 137 (EDVVTTGGS). Residues T133 and R161 each coordinate orotate.

Belongs to the purine/pyrimidine phosphoribosyltransferase family. PyrE subfamily. As to quaternary structure, homodimer. Requires Mg(2+) as cofactor.

It catalyses the reaction orotidine 5'-phosphate + diphosphate = orotate + 5-phospho-alpha-D-ribose 1-diphosphate. It participates in pyrimidine metabolism; UMP biosynthesis via de novo pathway; UMP from orotate: step 1/2. Functionally, catalyzes the transfer of a ribosyl phosphate group from 5-phosphoribose 1-diphosphate to orotate, leading to the formation of orotidine monophosphate (OMP). The polypeptide is Orotate phosphoribosyltransferase (Prochlorococcus marinus (strain MIT 9303)).